The primary structure comprises 254 residues: Ciliary microtubule associated protein 1A (254 aa).

STPGR repeat units lie at residues 180-205 (PGPA…MAAR) and 216-241 (PGPG…FGIK). Residues 207–226 (EPPGDKTLKPGPGAHSPEKV) are disordered.

The protein belongs to the CIMAP family. As to quaternary structure, microtubule inner protein component of sperm flagellar doublet microtubules.

It is found in the cytoplasm. It localises to the cytoskeleton. Its subcellular location is the flagellum axoneme. Outer dense fibers are filamentous structures located on the outside of the axoneme in the midpiece and principal piece of the mammalian sperm tail. May help to maintain the passive elastic structures and elastic recoil of the sperm tail. This chain is Ciliary microtubule associated protein 1A (CIMAP1A), found in Bos taurus (Bovine).